The chain runs to 318 residues: S-adenosylmethionine/S-adenosylhomocysteine transporter (318 aa).

Helical transmembrane passes span 7-27 (FANL…AFIW), 44-64 (LFVT…LLLF), 76-96 (VMPI…LEFI), 105-125 (KACF…YVQL), 134-154 (LGGL…GGGE), 163-183 (LGMP…GWTL), 193-213 (SLSI…LSLA), 231-251 (LFLQ…YNLF), 262-282 (FLSF…WLLL), and 285-305 (SFPP…RLIY). Residues 25 to 148 (FIWSSSFALS…LGLVSYLVYL (124 aa)) enclose the EamA 1 domain. The 114-residue stretch at 191–304 (CESLSITAIN…GFMVLGCRLI (114 aa)) folds into the EamA 2 domain.

It belongs to the drug/metabolite transporter (DMT) superfamily. 10 TMS drug/metabolite exporter (DME) (TC 2.A.7.3) family.

The protein resides in the cell membrane. Its function is as follows. Transports S-adenosylmethionine (SAM) and S-adenosylhomocysteine (SAH). Allows bacteria to acquire SAM from the eukaryotic host cell and to likely remove the toxic by-product SAH. The chain is S-adenosylmethionine/S-adenosylhomocysteine transporter from Chlamydia muridarum (strain MoPn / Nigg).